The following is a 557-amino-acid chain: Neurofilament light polypeptide (557 aa).

Residue Ser-2 is modified to N-acetylserine. The tract at residues 2–89 is head; sequence SSYSYDPYYT…KIVRTQEKAQ (88 aa). The IF rod domain occupies 86 to 396; it reads EKAQLQDLND…KLLEGEETRL (311 aa). Positions 90–121 are coil 1A; it reads LQDLNDRFANFIERVHELEQRNKVLEAELLLL. A linker 1 region spans residues 122–134; sequence RQKHNEPSRLRDL. The segment at 135–230 is coil 1B; sequence YEQEVRELRL…KVHEEELAQL (96 aa). The interval 231–248 is linker 12; that stretch reads QSQVQYAQISLEVEVAKP. The tract at residues 249–267 is coil 2A; it reads DLSSALRDIRAQYEKLAAK. Positions 268 to 276 are linker 2; sequence NMQSAEDWF. Residues 277-392 are coil 2B; that stretch reads KSRFTVLTQS…AAYRKLLEGE (116 aa). A tail, subdomain A region spans residues 393–437; the sequence is ETRLSFSGVGAITSGYTQSAPVFGRSAYSLQSSSYMTSRAFPTYY. The interval 393–557 is tail; sequence ETRLSFSGVG…KKKKKKKKKK (165 aa). The tail, subdomain B (acidic) stretch occupies residues 438-557; it reads SSHVQEEQLD…KKKKKKKKKK (120 aa). Positions 452 to 557 are disordered; that stretch reads IESSRAEEAK…KKKKKKKKKK (106 aa). Positions 453–464 are enriched in basic and acidic residues; sequence ESSRAEEAKAEA. The span at 465-538 shows a compositional bias: acidic residues; that stretch reads PEEEEEEAGE…GEGEEEEEGK (74 aa). Residues 539–548 show a composition bias toward basic and acidic residues; that stretch reads GEEPAEEESK.

This sequence belongs to the intermediate filament family. Forms homodimers (in vitro).

It is found in the cell projection. The protein resides in the axon. Its subcellular location is the cytoplasm. It localises to the cytoskeleton. In terms of biological role, neurofilaments usually contain three intermediate filament proteins: NEFL, NEFM, and NEFH which are involved in the maintenance of neuronal caliber. May additionally cooperate with other neuronal intermediate filament proteins to form neuronal filamentous networks. The chain is Neurofilament light polypeptide (nefl) from Xenopus tropicalis (Western clawed frog).